We begin with the raw amino-acid sequence, 553 residues long: CTP synthase (553 aa).

Residues 1-266 are amidoligase domain; it reads MTKNYIFITG…DNYICEYFKL (266 aa). Serine 14 is a CTP binding site. Position 14 (serine 14) interacts with UTP. Residues 15–20 and aspartate 72 contribute to the ATP site; that span reads SLGKGI. Residues aspartate 72 and glutamate 140 each contribute to the Mg(2+) site. Residues 147–149, 187–192, and lysine 223 contribute to the CTP site; these read DIE and KTKPTQ. Residues 187 to 192 and lysine 223 contribute to the UTP site; that span reads KTKPTQ. Position 239–241 (239–241) interacts with ATP; sequence KDV. Residues 291 to 544 enclose the Glutamine amidotransferase type-1 domain; sequence IIGIIGKYIK…IKSAKKNKKN (254 aa). L-glutamine is bound at residue glycine 352. Cysteine 379 serves as the catalytic Nucleophile; for glutamine hydrolysis. L-glutamine contacts are provided by residues 380–383, glutamate 403, and arginine 472; that span reads LGMQ. Catalysis depends on residues histidine 517 and glutamate 519.

The protein belongs to the CTP synthase family. As to quaternary structure, homotetramer.

The enzyme catalyses UTP + L-glutamine + ATP + H2O = CTP + L-glutamate + ADP + phosphate + 2 H(+). The catalysed reaction is L-glutamine + H2O = L-glutamate + NH4(+). It carries out the reaction UTP + NH4(+) + ATP = CTP + ADP + phosphate + 2 H(+). The protein operates within pyrimidine metabolism; CTP biosynthesis via de novo pathway; CTP from UDP: step 2/2. Its activity is regulated as follows. Allosterically activated by GTP, when glutamine is the substrate; GTP has no effect on the reaction when ammonia is the substrate. The allosteric effector GTP functions by stabilizing the protein conformation that binds the tetrahedral intermediate(s) formed during glutamine hydrolysis. Inhibited by the product CTP, via allosteric rather than competitive inhibition. Functionally, catalyzes the ATP-dependent amination of UTP to CTP with either L-glutamine or ammonia as the source of nitrogen. Regulates intracellular CTP levels through interactions with the four ribonucleotide triphosphates. The sequence is that of CTP synthase from Buchnera aphidicola subsp. Schizaphis graminum (strain Sg).